Reading from the N-terminus, the 318-residue chain is NADH-ubiquinone oxidoreductase chain 1 (318 aa).

Transmembrane regions (helical) follow at residues 1–21 (MLPITNSLTYIIPILIAVAFL), 71–91 (LLILSPILALTTAMLIWTPIP), 101–121 (LGLLSILAISSMAVNSTLWAG), 145–165 (VTLGIILLSILILTGGFTMQL), 172–192 (HIWLLTTSWPLTMMWFISTLA), 224–244 (FFLAEYTNIISMNLLTCIMFI), 253–273 (ELFLINLVTKTLLLSLTFLWI), and 294–314 (LPLTMALCLLQASLLVSISGI).

This sequence belongs to the complex I subunit 1 family.

Its subcellular location is the mitochondrion inner membrane. It catalyses the reaction a ubiquinone + NADH + 5 H(+)(in) = a ubiquinol + NAD(+) + 4 H(+)(out). In terms of biological role, core subunit of the mitochondrial membrane respiratory chain NADH dehydrogenase (Complex I) that is believed to belong to the minimal assembly required for catalysis. Complex I functions in the transfer of electrons from NADH to the respiratory chain. The immediate electron acceptor for the enzyme is believed to be ubiquinone. The protein is NADH-ubiquinone oxidoreductase chain 1 (MT-ND1) of Varanus rudicollis (Rough-necked monitor lizard).